A 545-amino-acid polypeptide reads, in one-letter code: uncharacterized protein (545 aa).

Residues 1–10 (MSRYRFRKAR) are compositionally biased toward basic residues. Positions 1–25 (MSRYRFRKARSNWPMGQNDSRWEPP) are disordered. WD repeat units follow at residues 417–456 (ACNTTFVRVLEKTRPECVVTEGFDSIIRIWDFRWPKNPMM) and 460–501 (GHSN…MLCS).

This is an uncharacterized protein from Caenorhabditis elegans.